The chain runs to 967 residues: Aminopeptidase N (967 aa).

Residues 1 to 8 lie on the Cytoplasmic side of the membrane; the sequence is MAKGFYIS. A helical; Signal-anchor for type II membrane protein transmembrane segment spans residues 9-32; that stretch reads KPVGILAILLGVAAVCTIIALSVV. The interval 33–66 is cytosolic Ser/Thr-rich junction; that stretch reads YSQEKNRSTESSTAASTAAPTGPTTTVATTLDQS. The Extracellular portion of the chain corresponds to 33–967; it reads YSQEKNRSTE…VVLRWFTENS (935 aa). An N-linked (GlcNAc...) asparagine glycan is attached at asparagine 38. The interval 41–61 is disordered; the sequence is TESSTAASTAAPTGPTTTVAT. Residues 67–967 form a metalloprotease region; sequence KPWNVYRLPK…VVLRWFTENS (901 aa). N-linked (GlcNAc...) asparagine glycosylation is found at asparagine 84 and asparagine 126. Residue tyrosine 175 is modified to Sulfotyrosine. N-linked (GlcNAc...) asparagine glycans are attached at residues asparagine 233 and asparagine 338. 351 to 355 provides a ligand contact to substrate; that stretch reads GAMEN. Histidine 387 provides a ligand contact to Zn(2+). Glutamate 388 serves as the catalytic Proton acceptor. Residues histidine 391 and glutamate 410 each contribute to the Zn(2+) site. Position 418 is a sulfotyrosine (tyrosine 418). 3 N-linked (GlcNAc...) asparagine glycosylation sites follow: asparagine 626, asparagine 682, and asparagine 740. Residues 670-840 form an interaction with FCoV and TGEV spike glycoprotein region; sequence ASAQKVPVTL…GALACSNQVW (171 aa). 2 disulfides stabilise this stretch: cysteine 762–cysteine 769 and cysteine 799–cysteine 835.

The protein belongs to the peptidase M1 family. Homodimer. Interacts with SLC6A19. In terms of assembly, (Microbial infection) Interacts with FCoV, CCoV, TGEV and HCoV-229E spike glycoprotein. Zn(2+) is required as a cofactor. In terms of processing, sulfated. N- and O-glycosylated. Post-translationally, may undergo proteolysis and give rise to a soluble form.

It localises to the cell membrane. It catalyses the reaction Release of an N-terminal amino acid, Xaa-|-Yaa- from a peptide, amide or arylamide. Xaa is preferably Ala, but may be most amino acids including Pro (slow action). When a terminal hydrophobic residue is followed by a prolyl residue, the two may be released as an intact Xaa-Pro dipeptide.. Its function is as follows. Broad specificity aminopeptidase which plays a role in the final digestion of peptides generated from hydrolysis of proteins by gastric and pancreatic proteases. Also involved in the processing of various peptides including peptide hormones, such as angiotensin III and IV, neuropeptides, and chemokines. May also be involved the cleavage of peptides bound to major histocompatibility complex class II molecules of antigen presenting cells. May have a role in angiogenesis and promote cholesterol crystallization. May have a role in amino acid transport by acting as binding partner of amino acid transporter SLC6A19 and regulating its activity. Functionally, (Microbial infection) In case of feline coronavirus (FCoV) infection, serves as a receptor for FCoV spike glycoprotein. It is as well a receptor for other serogroup I coronaviruses, like canine coronavirus (CCoV), porcine transmissible gastroenteritis virus (TGEV), and human coronavirus 229E (HCoV-229E). Also serves as a receptor for infectious bronchitis virus (IBV, Arkansas 99 serotype) in serogroup III. In Felis catus (Cat), this protein is Aminopeptidase N (ANPEP).